The primary structure comprises 819 residues: Leucine--tRNA ligase (819 aa).

The 'HIGH' region signature appears at Pro51 to His61. A 'KMSKS' region motif is present at residues Lys586–Ser590. Lys589 contributes to the ATP binding site.

Belongs to the class-I aminoacyl-tRNA synthetase family.

The protein localises to the cytoplasm. The catalysed reaction is tRNA(Leu) + L-leucine + ATP = L-leucyl-tRNA(Leu) + AMP + diphosphate. The polypeptide is Leucine--tRNA ligase (Deinococcus geothermalis (strain DSM 11300 / CIP 105573 / AG-3a)).